The sequence spans 207 residues: Small ribosomal subunit protein uS4 (207 aa).

The tract at residues 31–53 (KAKFDSKPGQHGRTSGARTSDFG) is disordered. An S4 RNA-binding domain is found at 97-160 (SRLDNVVYRM…KKQNRIVEAL (64 aa)).

It belongs to the universal ribosomal protein uS4 family. As to quaternary structure, part of the 30S ribosomal subunit. Contacts protein S5. The interaction surface between S4 and S5 is involved in control of translational fidelity.

One of the primary rRNA binding proteins, it binds directly to 16S rRNA where it nucleates assembly of the body of the 30S subunit. In terms of biological role, with S5 and S12 plays an important role in translational accuracy. The polypeptide is Small ribosomal subunit protein uS4 (Albidiferax ferrireducens (strain ATCC BAA-621 / DSM 15236 / T118) (Rhodoferax ferrireducens)).